Here is a 1487-residue protein sequence, read N- to C-terminus: Major viral transcription factor (1487 aa).

4 disordered regions span residues A41 to G295, L310 to P371, R409 to G442, and P803 to R1007. A compositionally biased stretch (pro residues) spans V66–E75. Low complexity-rich tracts occupy residues P165–S193 and D201–S213. Positions D214–E224 are enriched in acidic residues. Over residues A235 to G272 the composition is skewed to low complexity. Residues A273 to S285 are compositionally biased toward pro residues. Composition is skewed to low complexity over residues S807 to S829, P849 to Q860, and A867 to Q877. Residues T878 to R893 show a composition bias toward polar residues. Residues H920–K929 show a composition bias toward basic residues. Residues A938–A951 show a composition bias toward low complexity. A compositionally biased stretch (basic and acidic residues) spans G988–R1007.

Belongs to the herpesviridae ICP4 family. A long stretch of serine residues may be a major site of phosphorylation.

The protein resides in the host nucleus. Functionally, this IE protein is a multifunctional protein capable of migrating to the nucleus, binding to DNA, trans-activating other viral genes, and autoregulating its own synthesis. This is Major viral transcription factor (IE) from Equine herpesvirus 1 (strain Kentucky A) (EHV-1).